The following is a 235-amino-acid chain: Small ribosomal subunit protein uS3 (235 aa).

In terms of domain architecture, KH type-2 spans 39–107; the sequence is VRKFLNKELM…PAQINIAEVK (69 aa).

This sequence belongs to the universal ribosomal protein uS3 family. Part of the 30S ribosomal subunit. Forms a tight complex with proteins S10 and S14.

In terms of biological role, binds the lower part of the 30S subunit head. Binds mRNA in the 70S ribosome, positioning it for translation. This Actinobacillus succinogenes (strain ATCC 55618 / DSM 22257 / CCUG 43843 / 130Z) protein is Small ribosomal subunit protein uS3.